Here is a 66-residue protein sequence, read N- to C-terminus: Potassium channel toxin alpha-KTx 30.3 (66 aa).

Residues 1 to 24 form the signal peptide; it reads MNKTFFLVVIMATVLVLAFDATDA. Cystine bridges form between Cys30/Cys50, Cys36/Cys55, and Cys40/Cys57.

This sequence belongs to the short scorpion toxin superfamily. Potassium channel inhibitor family. Alpha-KTx 30 subfamily. In terms of tissue distribution, expressed by the venom gland.

Its subcellular location is the secreted. Inhibits Kv1.3/KCNA3 channel. The sequence is that of Potassium channel toxin alpha-KTx 30.3 from Scorpiops jendeki (Scorpion).